Reading from the N-terminus, the 208-residue chain is Thymidylate kinase (208 aa).

ATP is bound at residue Gly11–Thr18.

This sequence belongs to the thymidylate kinase family.

It catalyses the reaction dTMP + ATP = dTDP + ADP. Functionally, phosphorylation of dTMP to form dTDP in both de novo and salvage pathways of dTTP synthesis. In Psychrobacter sp. (strain PRwf-1), this protein is Thymidylate kinase.